The chain runs to 1232 residues: Anion exchange protein 3 (1232 aa).

Over residues 1–11 (MANGVIPPPGG) the composition is skewed to pro residues. 2 disordered regions span residues 1–316 (MANG…KLDR) and 429–498 (NDDK…GDGH). Residues 1–708 (MANGVIPPPG…DLRDALHSQC (708 aa)) are Cytoplasmic-facing. Basic and acidic residues predominate over residues 58–75 (DPEKPSRSYSERDFEFHR). Composition is skewed to basic residues over residues 76-97 (HTSHHTHHPLSARLPPPHKLRR) and 104-113 (RHTRRKRKKE). Positions 134 to 152 (VDEEEEEEEEEEGESEAEP) are enriched in acidic residues. Phosphoserine occurs at positions 167, 170, 175, and 198. Over residues 200–215 (QHSSSSPSPRARASRL) the composition is skewed to low complexity. Over residues 267 to 279 (DDMKSHRLEDNPG) the composition is skewed to basic and acidic residues. Over residues 280–289 (VRRHLVKKPS) the composition is skewed to basic residues. Residue Arg295 is modified to Omega-N-methylarginine. Over residues 305–316 (LRRKKKKKKLDR) the composition is skewed to basic residues. The segment covering 440–450 (NPSSSSMNSVL) has biased composition (polar residues). Positions 481-498 (HDPDAKEKPLHMPGGDGH) are enriched in basic and acidic residues. A run of 5 helical transmembrane segments spans residues 709–731 (VAAVLFIYFAALSPAITFGGLLG), 737–774 (LMGVSELIVSTAVLGVLFSLLGAQPLLVVGFSGPLLVF), 794–816 (VWVGLWLVVFVLALVAAEGSFLV), 826–847 (IFAFLISLIFIYETFYKLYKVF), and 893–910 (ALLSLILMLGTFFIAFFL). Residues 709–1232 (VAAVLFIYFA…DEYNELHMPV (524 aa)) are membrane (anion exchange). The Cytoplasmic portion of the chain corresponds to 911–925 (RKFRNSRFLGGKARR). The next 5 helical transmembrane spans lie at 926 to 946 (IIGDFGIPISILVMVLVDYSI), 980 to 1002 (PFPPWMMVAAAVPALLVLILIFM), 1028 to 1049 (LLLIGSLGGLCGLFGLPWLTAA), 1083 to 1128 (VTGV…IQLS), and 1155 to 1191 (MHLFTCIQLGCIALLWVVKSTAASLAFPFLLLLTVPL). Cys1165 is lipidated: S-palmitoyl cysteine.

Belongs to the anion exchanger (TC 2.A.31) family. Expressed in the heart.

The protein resides in the cell membrane. It catalyses the reaction hydrogencarbonate(in) + chloride(out) = hydrogencarbonate(out) + chloride(in). Sodium-independent anion exchanger which mediates the electroneutral exchange of chloride for bicarbonate ions across the cell membrane. May be involved in the regulation of intracellular pH, and the modulation of cardiac action potential. The sequence is that of Anion exchange protein 3 (SLC4A3) from Homo sapiens (Human).